A 1235-amino-acid polypeptide reads, in one-letter code: Topoisomerase 1-associated factor 1 (1235 aa).

4 disordered regions span residues 327 to 357 (RERKMDNSKTFRPPRRARKPEMEPKDLGPPV), 584 to 610 (GEEAEDVGVPEDNDADDSGDDEQHAER), 812 to 841 (EGAADGEAADERSNKSAPPHITIRPDTEAR), and 897 to 1235 (EFSP…SDEE). Residues 585-603 (EEAEDVGVPEDNDADDSGD) show a composition bias toward acidic residues. Positions 929–947 (DDDEEEIRGFLGDDDDEDF) are enriched in acidic residues. Over residues 964–973 (QKKRQRKRRR) the composition is skewed to basic residues. Positions 977–986 (SGDEEDEGVS) are enriched in acidic residues. The span at 999 to 1044 (EKELEKIRKIKSEMYVHASDDETDDERDREFFERERKRQETKDSKF) shows a compositional bias: basic and acidic residues. Composition is skewed to acidic residues over residues 1070–1081 (VLDDEPESDESE) and 1099–1118 (SEEEQEEEEEEEEEEDSDEE). Residues 1124-1150 (AKSKTSKRKAAVPSKRPARRPGTAKKR) show a composition bias toward basic residues. Residues 1156 to 1170 (SDNDEDEDEEEDAMD) are compositionally biased toward acidic residues. The segment covering 1193-1202 (LGRRIDKMAM) has biased composition (basic and acidic residues). The span at 1203 to 1212 (DDGDEDEDDQ) shows a compositional bias: acidic residues.

Belongs to the timeless family. Component of the fork protection complex (FPC) consisting of tof-1 and csm-3.

Its subcellular location is the nucleus. Functionally, forms a fork protection complex (FPC) with csm-3 and which is required for chromosome segregation during meiosis and DNA damage repair. FPC coordinates leading and lagging strand synthesis and moves with the replication fork. FPC stabilizes replication forks in a configuration that is recognized by replication checkpoint sensors. The chain is Topoisomerase 1-associated factor 1 (tof-1) from Neurospora crassa (strain ATCC 24698 / 74-OR23-1A / CBS 708.71 / DSM 1257 / FGSC 987).